A 193-amino-acid polypeptide reads, in one-letter code: Thymidine kinase (193 aa).

ATP is bound by residues 14–21 and 87–90; these read GCMFSGKT and DELH. Glu-88 (proton acceptor) is an active-site residue. Residues Cys-147, Cys-150, Cys-185, and Cys-188 each contribute to the Zn(2+) site.

It belongs to the thymidine kinase family. In terms of assembly, homotetramer.

It is found in the cytoplasm. The enzyme catalyses thymidine + ATP = dTMP + ADP + H(+). This is Thymidine kinase from Roseiflexus sp. (strain RS-1).